A 168-amino-acid polypeptide reads, in one-letter code: MIDLGISKLALIGAVALIVIGPERLPKVARTVGALVGRAQRYINDVKAEVSREVELEELRKMRTEFENAARDVEQTIHKEVSEHTQALNEAFDGSASSSSSSDTGSGYVPSWDSAHKSHNGRKSWRVKQGARPIWFKRQQNTRMWVQSGAARVKRHRPASGRNRSFFE.

The helical transmembrane segment at 1 to 21 (MIDLGISKLALIGAVALIVIG) threads the bilayer. 2 disordered regions span residues 92–132 (FDGS…QGAR) and 146–168 (VQSG…SFFE). Positions 94–107 (GSASSSSSSDTGSG) are enriched in low complexity. Residues 117 to 126 (KSHNGRKSWR) are compositionally biased toward basic residues.

The protein belongs to the TatB family. The Tat system comprises two distinct complexes: a TatABC complex, containing multiple copies of TatA, TatB and TatC subunits, and a separate TatA complex, containing only TatA subunits. Substrates initially bind to the TatABC complex, which probably triggers association of the separate TatA complex to form the active translocon.

It localises to the cell inner membrane. In terms of biological role, part of the twin-arginine translocation (Tat) system that transports large folded proteins containing a characteristic twin-arginine motif in their signal peptide across membranes. Together with TatC, TatB is part of a receptor directly interacting with Tat signal peptides. TatB may form an oligomeric binding site that transiently accommodates folded Tat precursor proteins before their translocation. The chain is Sec-independent protein translocase protein TatB from Cupriavidus metallidurans (strain ATCC 43123 / DSM 2839 / NBRC 102507 / CH34) (Ralstonia metallidurans).